The chain runs to 301 residues: Tyrosine recombinase XerC (301 aa).

The region spanning 1 to 89 (MGLDGLAAYL…SWRQYCVWLV (89 aa)) is the Core-binding (CB) domain. The 181-residue stretch at 110 to 290 (RVPKALPQEW…DFDHIARLYD (181 aa)) folds into the Tyr recombinase domain. Active-site residues include R151, K175, H242, R245, and H268. The O-(3'-phospho-DNA)-tyrosine intermediate role is filled by Y277.

It belongs to the 'phage' integrase family. XerC subfamily. As to quaternary structure, forms a cyclic heterotetrameric complex composed of two molecules of XerC and two molecules of XerD.

It localises to the cytoplasm. Functionally, site-specific tyrosine recombinase, which acts by catalyzing the cutting and rejoining of the recombining DNA molecules. The XerC-XerD complex is essential to convert dimers of the bacterial chromosome into monomers to permit their segregation at cell division. It also contributes to the segregational stability of plasmids. This Neisseria meningitidis serogroup B (strain ATCC BAA-335 / MC58) protein is Tyrosine recombinase XerC.